Reading from the N-terminus, the 489-residue chain is MTFRNCVAVDLGASSGRVMLARYERECRSLTLREIHRFNNGLHSQNGYVTWDVDSLESAIRLGLNKVCEEGIRIDSIGIDTWGVDFVLLDQQGQRVGLPVAYRDSRTNGLMAQAQQQLGKRDIYQRSGIQFLPFNTLYQLRALTEQQPELIPHIAHALLMPDYFSYRLTGKMNWEYTNATTTQLVNINSDDWDESLLAWSGANKAWFGRPTHPGNVIGHWICPQGNEIPVVAVASHDTASAVIASPLNGSRAAYLSSGTWSLMGFESQTPFTNDTALAANITNEGGAEGRYRVLKNIMGLWLLQRVLQERQINDLPALISATQALPACRFIINPNDDRFINPETMCSEIQAACRETAQPIPESDAELARCIFDSLALLYADVLHELAQLRGEDFSQLHIVGGGCQNTLLNQLCADACGIRVIAGPVEASTLGNIGIQLMTLDELNNVDDFRQVVSTTANLTTFTPNPDSEIAHYVARIHSTRQTKELCA.

13-17 contacts ATP; that stretch reads ASSGR. Cysteine 68 and cysteine 222 form a disulfide bridge. Residues glycine 83 and 236-238 contribute to the substrate site; that span reads HDT. The active-site Proton acceptor is the aspartate 237. Residue threonine 259 coordinates ATP. Asparagine 296 contributes to the substrate binding site. Residue glutamine 304 participates in ATP binding. The cysteines at positions 353 and 370 are disulfide-linked. Glycine 402 is a binding site for ATP. Cysteine 413 and cysteine 417 form a disulfide bridge.

It belongs to the rhamnulokinase family. Monomer. The cofactor is Mg(2+).

The enzyme catalyses L-rhamnulose + ATP = L-rhamnulose 1-phosphate + ADP + H(+). The protein operates within carbohydrate degradation; L-rhamnose degradation; glycerone phosphate from L-rhamnose: step 2/3. In terms of biological role, involved in the catabolism of L-rhamnose (6-deoxy-L-mannose). Catalyzes the transfer of the gamma-phosphate group from ATP to the 1-hydroxyl group of L-rhamnulose to yield L-rhamnulose 1-phosphate. In Escherichia coli O157:H7, this protein is Rhamnulokinase.